The chain runs to 269 residues: Zinc transporter ZupT (269 aa).

8 helical membrane passes run 12 to 32 (AFSITLAAGLFTVLGSGLVMF), 41 to 61 (LSFGLAFAGGAMVYVSLTEIF), 75 to 95 (DHAFAAATMAFLAGMGGIALI), 126 to 146 (MMAAFAITAHNFPEGLATFFA), 152 to 172 (AVGMPLALAIAIHNIPEGISI), 187 to 207 (VWACLLSGLAEPLGAALGYLV), 211 to 231 (FLSPAVFGSVFGVIAGVMVFL), and 249 to 269 (TVYGLTMGMAVIAVSLVLFHF). Residues Asn136 and Glu139 each contribute to the Fe(2+) site. Positions 139 and 164 each coordinate Zn(2+). Fe(2+) contacts are provided by Asn165, Glu168, and Glu197. Residue Glu168 coordinates Zn(2+).

The protein belongs to the ZIP transporter (TC 2.A.5) family. ZupT subfamily.

The protein localises to the cell inner membrane. The catalysed reaction is Zn(2+)(in) = Zn(2+)(out). Functionally, mediates zinc uptake. May also transport other divalent cations. The chain is Zinc transporter ZupT from Neisseria meningitidis serogroup A / serotype 4A (strain DSM 15465 / Z2491).